Consider the following 325-residue polypeptide: Phosphate import ATP-binding protein PstB (325 aa).

The ABC transporter domain maps to Ile-79 to Ile-320. Residue Gly-111–Ser-118 coordinates ATP.

This sequence belongs to the ABC transporter superfamily. Phosphate importer (TC 3.A.1.7) family. In terms of assembly, the complex is composed of two ATP-binding proteins (PstB), two transmembrane proteins (PstC and PstA) and a solute-binding protein (PstS).

The protein resides in the cell membrane. The catalysed reaction is phosphate(out) + ATP + H2O = ADP + 2 phosphate(in) + H(+). Its function is as follows. Part of the ABC transporter complex PstSACB involved in phosphate import. Responsible for energy coupling to the transport system. This chain is Phosphate import ATP-binding protein PstB, found in Mycoplasmoides gallisepticum (strain R(low / passage 15 / clone 2)) (Mycoplasma gallisepticum).